Here is a 177-residue protein sequence, read N- to C-terminus: MDTPDSASRVFCGRFLSMVNTDDVNAIILAQKNMLDRFEKTNEMLLNFNNLSSVRLQQMSERFMHHTRTLVDMKRDLDSIFRRIRTLKGKLARQHPEAFSHIPEGSFLEDEDEDPIPPSITTTIATSEQSTGSCDTSPDTVSPSLSPGFEDLSHIQPGSPAINGHRQTDDEEETHEE.

M1 carries the N-acetylmethionine modification. The disordered stretch occupies residues S100–E177. Residues A125–L145 are compositionally biased toward polar residues.

It belongs to the KXD1 family. As to quaternary structure, component of the BLOC-one-related complex (BORC) which is composed of BLOC1S1, BLOC1S2, BORCS5, BORCS6, BORCS7, BORCS8, KXD1 and SNAPIN. Associates with the BLOC-1 complex. Interacts with BLOC1S1. Interacts with DTNBP1/BLOC1S7 (via coiled-coil domain). In terms of tissue distribution, widely expressed.

It is found in the lysosome membrane. As part of the BORC complex may play a role in lysosomes movement and localization at the cell periphery. Associated with the cytosolic face of lysosomes, the BORC complex may recruit ARL8B and couple lysosomes to microtubule plus-end-directed kinesin motor. May also be involved in the biogenesis of lysosome-related organelles such as melanosomes. This Mus musculus (Mouse) protein is KxDL motif-containing protein 1 (Kxd1).